The following is a 295-amino-acid chain: ATP synthase gamma chain (295 aa).

The protein belongs to the ATPase gamma chain family. As to quaternary structure, F-type ATPases have 2 components, CF(1) - the catalytic core - and CF(0) - the membrane proton channel. CF(1) has five subunits: alpha(3), beta(3), gamma(1), delta(1), epsilon(1). CF(0) has three main subunits: a, b and c.

The protein resides in the cell inner membrane. Functionally, produces ATP from ADP in the presence of a proton gradient across the membrane. The gamma chain is believed to be important in regulating ATPase activity and the flow of protons through the CF(0) complex. In Sulfurimonas denitrificans (strain ATCC 33889 / DSM 1251) (Thiomicrospira denitrificans (strain ATCC 33889 / DSM 1251)), this protein is ATP synthase gamma chain.